A 768-amino-acid chain; its full sequence is Actin filament-associated protein 1-like 1 (768 aa).

Positions 82–145 are disordered; the sequence is DLRDMPEDDG…GKSPEYISSH (64 aa). 4 positions are modified to phosphoserine: Ser-94, Ser-98, Ser-104, and Ser-153. Residues 173-211 form a disordered region; the sequence is GELKSSYNDSDAMSSSYESYDEEEEEGKSPQPRHQWPSE. Positions 177 to 190 are enriched in low complexity; it reads SSYNDSDAMSSSYE. One can recognise a PH 1 domain in the interval 220–316; it reads ECRICAFLLR…WLKVIREVSK (97 aa). 2 positions are modified to phosphoserine: Ser-329 and Ser-343. Positions 418–512 constitute a PH 2 domain; sequence EVPCCGYLNV…WLGLLLVEMG (95 aa). Tyr-557 carries the phosphotyrosine modification. The disordered stretch occupies residues 566-604; sequence QDEEPERPTGAQVKRHASSCSEKSHRVDPQVKVKRHASS. Positions 587–596 are enriched in basic and acidic residues; that stretch reads EKSHRVDPQV. Positions 611-700 form a coiled coil; the sequence is GKNRAEEDAR…VAVKERLQQS (90 aa). Positions 705–768 are disordered; that stretch reads PALGLSVSSK…KAKEWEMKKT (64 aa). The span at 710-729 shows a compositional bias: polar residues; the sequence is SVSSKPKSGETANKPQNSVP. Ser-747 carries the post-translational modification Phosphoserine. The span at 759 to 768 shows a compositional bias: basic and acidic residues; it reads KAKEWEMKKT.

As to quaternary structure, interacts with CTTN. In terms of tissue distribution, expressed in breast, colon and brain. In all 3 tissues, expressed in the microvasculature (at protein level). In addition, in the breast, found in the contractile myoepithelial cell layer which surrounds the breast ducts (at protein level). In the colon, expressed in the mucous membrane and colonic crypts and in the smooth muscle cell layer which provide movement of the colon (at protein level). In the cerebellum, localized around the Purkinje neurons and the granule cells of the granular layer, but not inside cell bodies (at protein level). Outside of the cerebellar cortex, expressed in glial cells (at protein level). Highly expressed away from the cell bodies within the dentate nucleus (at protein level).

It localises to the cytoplasm. It is found in the cell projection. Its subcellular location is the podosome. The protein localises to the invadopodium. The protein resides in the cytoskeleton. It localises to the stress fiber. May be involved in podosome and invadosome formation. This chain is Actin filament-associated protein 1-like 1 (AFAP1L1), found in Homo sapiens (Human).